Here is a 192-residue protein sequence, read N- to C-terminus: MKTILSTQTVDIPDNVDVTLKGRTVSVKGPRGVLRREFNHINLELRLLGKKQKKLRVDKWWGNRKELATVRTICSHVQNMIKGVTLGFRYKMRSVYAHFPINVVIQETGSLVEIRNFLGEKYIRRVRMRPGVNCALSAAQKDELVLEGNDIELVSNSAALIQQATTVKNKDIRKFLDGIYVSEKGTVVEPES.

This sequence belongs to the universal ribosomal protein uL6 family. As to quaternary structure, component of the large ribosomal subunit.

The protein resides in the cytoplasm. Its function is as follows. Component of the large ribosomal subunit. The ribosome is a large ribonucleoprotein complex responsible for the synthesis of proteins in the cell. The polypeptide is Large ribosomal subunit protein uL6 (rpl9) (Ictalurus punctatus (Channel catfish)).